Here is a 367-residue protein sequence, read N- to C-terminus: Peptide chain release factor 2 (367 aa).

An N5-methylglutamine modification is found at Gln254.

This sequence belongs to the prokaryotic/mitochondrial release factor family. Methylated by PrmC. Methylation increases the termination efficiency of RF2.

Its subcellular location is the cytoplasm. In terms of biological role, peptide chain release factor 2 directs the termination of translation in response to the peptide chain termination codons UGA and UAA. This Leptospira interrogans serogroup Icterohaemorrhagiae serovar copenhageni (strain Fiocruz L1-130) protein is Peptide chain release factor 2.